A 337-amino-acid chain; its full sequence is Phosphate acyltransferase (337 aa).

Belongs to the PlsX family. In terms of assembly, homodimer. Probably interacts with PlsY.

The protein resides in the cytoplasm. It carries out the reaction a fatty acyl-[ACP] + phosphate = an acyl phosphate + holo-[ACP]. The protein operates within lipid metabolism; phospholipid metabolism. Functionally, catalyzes the reversible formation of acyl-phosphate (acyl-PO(4)) from acyl-[acyl-carrier-protein] (acyl-ACP). This enzyme utilizes acyl-ACP as fatty acyl donor, but not acyl-CoA. The protein is Phosphate acyltransferase of Ehrlichia canis (strain Jake).